The primary structure comprises 271 residues: Autophagy-related protein 27 (271 aa).

The first 19 residues, 1–19 (MVSKTWICGFISIITVVQA), serve as a signal peptide directing secretion. The region spanning 20–166 (LSCEKHDVLK…TLKGPSGCLK (147 aa)) is the MRH domain. Over 20–197 (LSCEKHDVLK…KKPAKKAGGT (178 aa)) the chain is Lumenal. Intrachain disulfides connect Cys22-Cys60, Cys71-Cys78, and Cys135-Cys164. A disordered region spans residues 161-190 (PSGCLKSKDDDKKNGDGDNGKDGDNEGKKP). The segment covering 166–189 (KSKDDDKKNGDGDNGKDGDNEGKK) has biased composition (basic and acidic residues). The helical transmembrane segment at 198–218 (LWFTWLFLYALLFTLIYLMVV) threads the bilayer. Residues 219–271 (SFLNTRGGSFQDFRAEFIQRSTQFLTSLPEFCREVVSRILGRSTAQRGGYSAV) lie on the Cytoplasmic side of the membrane.

Belongs to the ATG27 family. As to quaternary structure, forms a complex with ATG9 and ATG23.

The protein localises to the cytoplasmic vesicle membrane. Its subcellular location is the golgi apparatus membrane. The protein resides in the mitochondrion membrane. It localises to the preautophagosomal structure membrane. In terms of biological role, effector of VPS34 phosphatidylinositol 3-phosphate kinase signaling. Regulates the cytoplasm to vacuole transport (Cvt) vesicle formation. Plays a role in ATG protein retrieval from the pre-autophagosomal structure (PAS) and is especially required for autophagy-dependent cycling of ATG9. This is Autophagy-related protein 27 (ATG27) from Saccharomyces cerevisiae (strain YJM789) (Baker's yeast).